Consider the following 279-residue polypeptide: Alcohol dehydrogenase-related 31 kDa protein (279 aa).

11–34 (YVADCGGIALETSKVLMTKNIAKL) lines the NAD(+) pocket. Residue S139 coordinates substrate. Y152 serves as the catalytic Proton acceptor.

This sequence belongs to the short-chain dehydrogenases/reductases (SDR) family.

This Drosophila madeirensis (Fruit fly) protein is Alcohol dehydrogenase-related 31 kDa protein (Adhr).